Reading from the N-terminus, the 917-residue chain is Auxin response factor 17 (917 aa).

A DNA-binding region (TF-B3) is located at residues 134-236 (FCKTLTASDT…QLLLGIRRAN (103 aa)). The tract at residues 571–649 (SVPNALSPFS…RPTAVPVPDP (79 aa)) is disordered. Composition is skewed to low complexity over residues 576–594 (LSPF…MTLQ) and 604–620 (SYPD…NTST). The PB1 domain maps to 786–870 (ATFVKVYKSG…SCIKILSPQE (85 aa)).

This sequence belongs to the ARF family. In terms of assembly, homodimers and heterodimers. Expressed in roots, culms, leaves and young panicles.

It is found in the nucleus. Its function is as follows. Auxin response factors (ARFs) are transcriptional factors that bind specifically to the DNA sequence 5'-TGTCTC-3' found in the auxin-responsive promoter elements (AuxREs). The sequence is that of Auxin response factor 17 (ARF17) from Oryza sativa subsp. japonica (Rice).